Consider the following 121-residue polypeptide: Large ribosomal subunit protein uL18 (121 aa).

Belongs to the universal ribosomal protein uL18 family. As to quaternary structure, part of the 50S ribosomal subunit; part of the 5S rRNA/L5/L18/L25 subcomplex. Contacts the 5S and 23S rRNAs.

In terms of biological role, this is one of the proteins that bind and probably mediate the attachment of the 5S RNA into the large ribosomal subunit, where it forms part of the central protuberance. This chain is Large ribosomal subunit protein uL18, found in Streptococcus suis (strain 98HAH33).